The chain runs to 309 residues: L-lactate dehydrogenase 2 (309 aa).

Residues Val-16, Asp-37, Tyr-67, and 81-82 contribute to the NAD(+) site; that span reads GV. Arg-90 provides a ligand contact to substrate. Ser-103 contacts NAD(+). Residue 122-125 participates in substrate binding; the sequence is NPVD. Thr-145 contacts NAD(+). Residue 150–153 coordinates substrate; sequence DTAR. His-177 (proton acceptor) is an active-site residue. Residue Thr-227 participates in substrate binding.

It belongs to the LDH/MDH superfamily. LDH family. Homotetramer.

The protein resides in the cytoplasm. It carries out the reaction (S)-lactate + NAD(+) = pyruvate + NADH + H(+). It functions in the pathway fermentation; pyruvate fermentation to lactate; (S)-lactate from pyruvate: step 1/1. Catalyzes the conversion of lactate to pyruvate. This Lactiplantibacillus plantarum (strain ATCC BAA-793 / NCIMB 8826 / WCFS1) (Lactobacillus plantarum) protein is L-lactate dehydrogenase 2.